The primary structure comprises 346 residues: Methionine import ATP-binding protein MetN 1 (346 aa).

The ABC transporter domain occupies 2–241; the sequence is IELKNVSKVF…PQHVTTKKFV (240 aa). 38-45 provides a ligand contact to ATP; the sequence is GYSGAGKS.

Belongs to the ABC transporter superfamily. Methionine importer (TC 3.A.1.24) family. In terms of assembly, the complex is composed of two ATP-binding proteins (MetN), two transmembrane proteins (MetI) and a solute-binding protein (MetQ).

The protein localises to the cell membrane. The enzyme catalyses L-methionine(out) + ATP + H2O = L-methionine(in) + ADP + phosphate + H(+). The catalysed reaction is D-methionine(out) + ATP + H2O = D-methionine(in) + ADP + phosphate + H(+). In terms of biological role, part of the ABC transporter complex MetNIQ involved in methionine import. Responsible for energy coupling to the transport system. This Bacillus anthracis protein is Methionine import ATP-binding protein MetN 1.